The chain runs to 247 residues: MMERAEDLRLSLSLSSPLIAPRTHHVAMLFHAPPEKRFLEMPLLPAAKRSEVVAAEEERAGLRGGGGSDEEDGGCGIDGSRKKLRLSKDQSAVLEDSFREHPTLNPRQKATLAQQLGLRPRQVEVWFQNRRARTKLKQTEVDCEFLKRCCETLTEENRRLQKEVQELRALKLVSPHLYMNMSPPTTLTMCPSCERVSNTNNNSSAAAAADRRGIRTTTAAGGGSVVDTAADGGILCHRPIAVRPQQS.

A disordered region spans residues 58-81 (ERAGLRGGGGSDEEDGGCGIDGSR). A DNA-binding region (homeobox) is located at residues 79–138 (GSRKKLRLSKDQSAVLEDSFREHPTLNPRQKATLAQQLGLRPRQVEVWFQNRRARTKLKQ). The segment at 137 to 182 (KQTEVDCEFLKRCCETLTEENRRLQKEVQELRALKLVSPHLYMNMS) is leucine-zipper.

Belongs to the HD-ZIP homeobox family. Class II subfamily. In terms of tissue distribution, expressed in seedlings, roots, stems, leaf sheaths and blades and panicles.

Its subcellular location is the nucleus. In terms of biological role, probable transcription factor. This is Homeobox-leucine zipper protein HOX17 (HOX17) from Oryza sativa subsp. japonica (Rice).